Here is a 648-residue protein sequence, read N- to C-terminus: Leucine aminopeptidase 2 (648 aa).

A peptide-binding positions include 143–145 (QCQ) and 269–274 (PYGGME). Residue His-298 coordinates Zn(2+). Glu-299 serves as the catalytic Proton acceptor. Zn(2+) is bound by residues His-302 and Glu-321. Tyr-408 (proton donor) is an active-site residue.

This sequence belongs to the peptidase M1 family. It depends on Zn(2+) as a cofactor.

It localises to the cytoplasm. It is found in the nucleus. The enzyme catalyses an epoxide + H2O = an ethanediol. Its function is as follows. Aminopeptidase that preferentially cleaves di- and tripeptides. Also has low epoxide hydrolase activity (in vitro). Can hydrolyze the epoxide leukotriene LTA(4) but it forms preferentially 5,6-dihydroxy-7,9,11,14-eicosatetraenoic acid rather than the cytokine leukotriene B(4) as the product compared to the homologous mammalian enzyme (in vitro). In Lodderomyces elongisporus (strain ATCC 11503 / CBS 2605 / JCM 1781 / NBRC 1676 / NRRL YB-4239) (Yeast), this protein is Leucine aminopeptidase 2.